Here is a 343-residue protein sequence, read N- to C-terminus: Holliday junction branch migration complex subunit RuvB (343 aa).

Residues 1–23 (MSDDFEVVRPEEQAGDEKDRDLR) are disordered. The interval 1-183 (MSDDFEVVRP…FGIVQRFEFY (183 aa)) is large ATPase domain (RuvB-L). ATP is bound by residues Leu-22, Arg-23, Gly-64, Lys-67, Thr-68, Thr-69, 130 to 132 (EDY), Arg-173, Tyr-183, and Arg-220. Thr-68 is a Mg(2+) binding site. The interval 184 to 254 (SHEELASIIS…TVAAGLKQLN (71 aa)) is small ATPAse domain (RuvB-S). The head domain (RuvB-H) stretch occupies residues 257 to 343 (GLGLETYDRQ…LGDGQEGLFD (87 aa)). DNA-binding residues include Arg-312 and Arg-317.

This sequence belongs to the RuvB family. In terms of assembly, homohexamer. Forms an RuvA(8)-RuvB(12)-Holliday junction (HJ) complex. HJ DNA is sandwiched between 2 RuvA tetramers; dsDNA enters through RuvA and exits via RuvB. An RuvB hexamer assembles on each DNA strand where it exits the tetramer. Each RuvB hexamer is contacted by two RuvA subunits (via domain III) on 2 adjacent RuvB subunits; this complex drives branch migration. In the full resolvosome a probable DNA-RuvA(4)-RuvB(12)-RuvC(2) complex forms which resolves the HJ.

It is found in the cytoplasm. The catalysed reaction is ATP + H2O = ADP + phosphate + H(+). In terms of biological role, the RuvA-RuvB-RuvC complex processes Holliday junction (HJ) DNA during genetic recombination and DNA repair, while the RuvA-RuvB complex plays an important role in the rescue of blocked DNA replication forks via replication fork reversal (RFR). RuvA specifically binds to HJ cruciform DNA, conferring on it an open structure. The RuvB hexamer acts as an ATP-dependent pump, pulling dsDNA into and through the RuvAB complex. RuvB forms 2 homohexamers on either side of HJ DNA bound by 1 or 2 RuvA tetramers; 4 subunits per hexamer contact DNA at a time. Coordinated motions by a converter formed by DNA-disengaged RuvB subunits stimulates ATP hydrolysis and nucleotide exchange. Immobilization of the converter enables RuvB to convert the ATP-contained energy into a lever motion, pulling 2 nucleotides of DNA out of the RuvA tetramer per ATP hydrolyzed, thus driving DNA branch migration. The RuvB motors rotate together with the DNA substrate, which together with the progressing nucleotide cycle form the mechanistic basis for DNA recombination by continuous HJ branch migration. Branch migration allows RuvC to scan DNA until it finds its consensus sequence, where it cleaves and resolves cruciform DNA. The protein is Holliday junction branch migration complex subunit RuvB of Treponema denticola (strain ATCC 35405 / DSM 14222 / CIP 103919 / JCM 8153 / KCTC 15104).